The sequence spans 457 residues: Heme sensor protein HssS (457 aa).

Transmembrane regions (helical) follow at residues 9 to 29 (IAIY…VLTN) and 164 to 184 (TFLA…VIAS). An HAMP domain is found at 186–238 (YSIIRPVKKLKLATERLIDGDFETPIKQTRKDEIGTLQYHFNKMRESLGQVDQ). Residues 246 to 456 (NVSHEIKTPL…TFTITLPNNS (211 aa)) enclose the Histidine kinase domain. His249 is subject to Phosphohistidine; by autocatalysis.

In terms of processing, autophosphorylated.

The protein localises to the cell membrane. It catalyses the reaction ATP + protein L-histidine = ADP + protein N-phospho-L-histidine.. Its function is as follows. Member of the two-component regulatory system HssS/HssR involved in intracellular heme homeostasis and tempering of staphylococcal virulence. HssS functions as a heme sensor histidine kinase which is autophosphorylated at a histidine residue and transfers its phosphate group to an aspartate residue of HssR. HssR/HssS activates the expression of hrtAB, an efflux pump, in response to extracellular heme, hemin, hemoglobin or blood. In Staphylococcus aureus (strain Mu3 / ATCC 700698), this protein is Heme sensor protein HssS (hssS).